The primary structure comprises 574 residues: Proline--tRNA ligase (574 aa).

This sequence belongs to the class-II aminoacyl-tRNA synthetase family. ProS type 1 subfamily. In terms of assembly, homodimer.

The protein localises to the cytoplasm. The catalysed reaction is tRNA(Pro) + L-proline + ATP = L-prolyl-tRNA(Pro) + AMP + diphosphate. Its function is as follows. Catalyzes the attachment of proline to tRNA(Pro) in a two-step reaction: proline is first activated by ATP to form Pro-AMP and then transferred to the acceptor end of tRNA(Pro). As ProRS can inadvertently accommodate and process non-cognate amino acids such as alanine and cysteine, to avoid such errors it has two additional distinct editing activities against alanine. One activity is designated as 'pretransfer' editing and involves the tRNA(Pro)-independent hydrolysis of activated Ala-AMP. The other activity is designated 'posttransfer' editing and involves deacylation of mischarged Ala-tRNA(Pro). The misacylated Cys-tRNA(Pro) is not edited by ProRS. The sequence is that of Proline--tRNA ligase from Nautilia profundicola (strain ATCC BAA-1463 / DSM 18972 / AmH).